The following is a 729-amino-acid chain: Fatty acid oxidation complex subunit alpha (729 aa).

Residues 1-189 are enoyl-CoA hydratase/isomerase; the sequence is MLYKGDTLYL…KIGLVDGVVK (189 aa). Asp-296 serves as a coordination point for substrate. Positions 311-729 are 3-hydroxyacyl-CoA dehydrogenase; sequence ETPKHAAVLG…ARPVGELKTA (419 aa). NAD(+) contacts are provided by residues Met-324, Asp-343, 400 to 402, Lys-407, and Ser-429; that span reads VVE. His-450 acts as the For 3-hydroxyacyl-CoA dehydrogenase activity in catalysis. An NAD(+)-binding site is contributed by Asn-453. Positions 500 and 660 each coordinate substrate.

It in the N-terminal section; belongs to the enoyl-CoA hydratase/isomerase family. In the C-terminal section; belongs to the 3-hydroxyacyl-CoA dehydrogenase family. Heterotetramer of two alpha chains (FadB) and two beta chains (FadA).

The enzyme catalyses a (3S)-3-hydroxyacyl-CoA + NAD(+) = a 3-oxoacyl-CoA + NADH + H(+). It catalyses the reaction a (3S)-3-hydroxyacyl-CoA = a (2E)-enoyl-CoA + H2O. The catalysed reaction is a 4-saturated-(3S)-3-hydroxyacyl-CoA = a (3E)-enoyl-CoA + H2O. It carries out the reaction (3S)-3-hydroxybutanoyl-CoA = (3R)-3-hydroxybutanoyl-CoA. The enzyme catalyses a (3Z)-enoyl-CoA = a 4-saturated (2E)-enoyl-CoA. It catalyses the reaction a (3E)-enoyl-CoA = a 4-saturated (2E)-enoyl-CoA. The protein operates within lipid metabolism; fatty acid beta-oxidation. In terms of biological role, involved in the aerobic and anaerobic degradation of long-chain fatty acids via beta-oxidation cycle. Catalyzes the formation of 3-oxoacyl-CoA from enoyl-CoA via L-3-hydroxyacyl-CoA. It can also use D-3-hydroxyacyl-CoA and cis-3-enoyl-CoA as substrate. The protein is Fatty acid oxidation complex subunit alpha of Enterobacter cloacae.